The chain runs to 494 residues: 5'-3' exonuclease PLD3 (494 aa).

Residues 1–37 are Cytoplasmic-facing; it reads MNPKVEYKQIQSHDEAENQVLQHECHQAKARKYYRCA. Residues 38–58 form a helical; Signal-anchor for type II membrane protein membrane-spanning segment; that stretch reads VVIAIIITLLFCVLASQLLLF. At 59 to 494 the chain is on the lumenal side; the sequence is PLFSITSQTT…LSSWKEKCIF (436 aa). An N-linked (GlcNAc...) asparagine glycan is attached at Asn100. Residues 198-225 enclose the PLD phosphodiesterase 1 domain; it reads TDGVLHTKFWVVDSEHFYIGSANMDWRS. Residues His203, Lys205, and Asp210 contribute to the active site. Residues Asn238, Asn260, Asn270, Asn286, and Asn389 are each glycosylated (N-linked (GlcNAc...) asparagine). The PLD phosphodiesterase 2 domain maps to 413–439; that stretch reads YARVNHNKYMVTDRVAYIGTSNWSGDY. Active-site residues include His418, Lys420, and Asp425. 3 N-linked (GlcNAc...) asparagine glycosylation sites follow: Asn434, Asn451, and Asn477.

This sequence belongs to the phospholipase D family. In terms of processing, N-glycosylated. Proteolytically processed to a soluble form that is stable within endosomes and lysosomes. During transport through the secretory pathway becomes proteolysed by cysteine proteases, thereby releasing a stable soluble lysosomal lumenal polypeptide, whereas the transmembrane-bound fragment is rapidly degraded. Its transport route to lysosomes involves ubiquitination and the ESCRT complex. Post-translationally, ubiquitinated. Ubiquitination mediates sorting into lysosomes.

The protein localises to the endoplasmic reticulum membrane. The protein resides in the lysosome lumen. Its subcellular location is the early endosome membrane. It is found in the late endosome membrane. It localises to the golgi apparatus membrane. The protein localises to the endosome membrane. It catalyses the reaction Exonucleolytic cleavage in the 5'- to 3'-direction to yield nucleoside 3'-phosphates.. Functionally, 5'-&gt;3' DNA exonuclease which digests single-stranded DNA (ssDNA). Regulates inflammatory cytokine responses via the degradation of nucleic acids, by reducing the concentration of ssDNA able to stimulate TLR9, a nucleotide-sensing receptor in collaboration with PLD4. May be important in myotube formation. Plays a role in lysosomal homeostasis. Involved in the regulation of endosomal protein sorting. The polypeptide is 5'-3' exonuclease PLD3 (pld3) (Xenopus tropicalis (Western clawed frog)).